The following is a 418-amino-acid chain: Actin-like protein 7B (418 aa).

Positions 1–42 (MATKNSPSPKPMGTAQGDPGEAGTLPAPEAAGIRDTGSTQLK) are disordered. Phosphoserine is present on serine 8.

This sequence belongs to the actin family. In terms of tissue distribution, testis specific.

The protein localises to the cytoplasm. It localises to the cytoskeleton. The polypeptide is Actin-like protein 7B (Actl7b) (Mus musculus (Mouse)).